Consider the following 153-residue polypeptide: Small ribosomal subunit protein uS15 (153 aa).

Belongs to the universal ribosomal protein uS15 family. Part of the 30S ribosomal subunit.

The polypeptide is Small ribosomal subunit protein uS15 (Sulfolobus acidocaldarius (strain ATCC 33909 / DSM 639 / JCM 8929 / NBRC 15157 / NCIMB 11770)).